Here is an 87-residue protein sequence, read N- to C-terminus: MAHKKAGGSSRNGRDSESKRLGVKVYGGQAINAGGIIVRQRGTRMHAGENVGMGKDHTLFALVDGHVKFATKGADKKHLVIVVPAAA.

Residues 1-21 (MAHKKAGGSSRNGRDSESKRL) are disordered.

Belongs to the bacterial ribosomal protein bL27 family.

This is Large ribosomal subunit protein bL27 from Burkholderia ambifaria (strain MC40-6).